Here is a 277-residue protein sequence, read N- to C-terminus: Glutamate racemase (277 aa).

Residues 13-14 (DS) and 45-46 (YG) contribute to the substrate site. C77 acts as the Proton donor/acceptor in catalysis. 78–79 (NT) is a substrate binding site. Catalysis depends on C192, which acts as the Proton donor/acceptor. Residue 193-194 (TH) participates in substrate binding.

This sequence belongs to the aspartate/glutamate racemases family.

It carries out the reaction L-glutamate = D-glutamate. It functions in the pathway cell wall biogenesis; peptidoglycan biosynthesis. Its function is as follows. Provides the (R)-glutamate required for cell wall biosynthesis. In Rhizobium meliloti (strain 1021) (Ensifer meliloti), this protein is Glutamate racemase.